We begin with the raw amino-acid sequence, 902 residues long: Protein translocase subunit SecA (902 aa).

ATP is bound by residues Gln87, 105 to 109, and Asp512; that span reads GEGKT. 2 disordered regions span residues 565 to 584 and 840 to 902; these read RRID…PGSS and VEEQ…GKLK. 2 stretches are compositionally biased toward basic and acidic residues: residues 840-859 and 873-882; these read VEEQ…HEDA and QVREGAKVGR. Zn(2+)-binding residues include Cys886, Cys888, Cys897, and His898. Over residues 892–902 the composition is skewed to basic residues; it reads KKYKQCHGKLK.

It belongs to the SecA family. In terms of assembly, monomer and homodimer. Part of the essential Sec protein translocation apparatus which comprises SecA, SecYEG and auxiliary proteins SecDF-YajC and YidC. Requires Zn(2+) as cofactor.

It localises to the cell inner membrane. Its subcellular location is the cytoplasm. The enzyme catalyses ATP + H2O + cellular proteinSide 1 = ADP + phosphate + cellular proteinSide 2.. Functionally, part of the Sec protein translocase complex. Interacts with the SecYEG preprotein conducting channel. Has a central role in coupling the hydrolysis of ATP to the transfer of proteins into and across the cell membrane, serving both as a receptor for the preprotein-SecB complex and as an ATP-driven molecular motor driving the stepwise translocation of polypeptide chains across the membrane. This chain is Protein translocase subunit SecA, found in Alteromonas mediterranea (strain DSM 17117 / CIP 110805 / LMG 28347 / Deep ecotype).